A 556-amino-acid chain; its full sequence is Arginine--tRNA ligase (556 aa).

The short motif at 132–142 is the 'HIGH' region element; it reads ANPTGDLHLGH.

It belongs to the class-I aminoacyl-tRNA synthetase family. As to quaternary structure, monomer.

It is found in the cytoplasm. The enzyme catalyses tRNA(Arg) + L-arginine + ATP = L-arginyl-tRNA(Arg) + AMP + diphosphate. The protein is Arginine--tRNA ligase of Bacillus velezensis (strain DSM 23117 / BGSC 10A6 / LMG 26770 / FZB42) (Bacillus amyloliquefaciens subsp. plantarum).